Consider the following 202-residue polypeptide: Large ribosomal subunit protein mL40 (202 aa).

The interval 42-79 (IQHQQTASYASKGKSGPPAGMFSGQKAGSKKSKGPKQV) is disordered.

This sequence belongs to the mitochondrion-specific ribosomal protein mL40 family. As to quaternary structure, component of the mitochondrial large ribosomal subunit (mt-LSU). Mature N.crassa 74S mitochondrial ribosomes consist of a small (37S) and a large (54S) subunit. The 37S small subunit contains a 16S ribosomal RNA (16S mt-rRNA) and 32 different proteins. The 54S large subunit contains a 23S rRNA (23S mt-rRNA) and 42 different proteins. mL40 is binding to NAD.

It localises to the mitochondrion. Functionally, component of the mitochondrial ribosome (mitoribosome), a dedicated translation machinery responsible for the synthesis of mitochondrial genome-encoded proteins, including at least some of the essential transmembrane subunits of the mitochondrial respiratory chain. The mitoribosomes are attached to the mitochondrial inner membrane and translation products are cotranslationally integrated into the membrane. This is Large ribosomal subunit protein mL40 (mrpl28) from Neurospora crassa (strain ATCC 24698 / 74-OR23-1A / CBS 708.71 / DSM 1257 / FGSC 987).